The chain runs to 334 residues: Ketol-acid reductoisomerase (NADP(+)) (334 aa).

Residues 1–181 (MTTVYYDQSV…GATRAGVLET (181 aa)) enclose the KARI N-terminal Rossmann domain. NADP(+) is bound by residues 25 to 28 (YGSQ), R48, S52, and 82 to 85 (DEIQ). Residue H107 is part of the active site. Residue G133 participates in NADP(+) binding. Residues 182–327 (SFKEETETDL…RELRDMMPFI (146 aa)) enclose the KARI C-terminal knotted domain. 4 residues coordinate Mg(2+): D190, E194, E226, and E230. Substrate is bound at residue S251.

The protein belongs to the ketol-acid reductoisomerase family. Mg(2+) serves as cofactor.

The enzyme catalyses (2R)-2,3-dihydroxy-3-methylbutanoate + NADP(+) = (2S)-2-acetolactate + NADPH + H(+). It carries out the reaction (2R,3R)-2,3-dihydroxy-3-methylpentanoate + NADP(+) = (S)-2-ethyl-2-hydroxy-3-oxobutanoate + NADPH + H(+). Its pathway is amino-acid biosynthesis; L-isoleucine biosynthesis; L-isoleucine from 2-oxobutanoate: step 2/4. It functions in the pathway amino-acid biosynthesis; L-valine biosynthesis; L-valine from pyruvate: step 2/4. Functionally, involved in the biosynthesis of branched-chain amino acids (BCAA). Catalyzes an alkyl-migration followed by a ketol-acid reduction of (S)-2-acetolactate (S2AL) to yield (R)-2,3-dihydroxy-isovalerate. In the isomerase reaction, S2AL is rearranged via a Mg-dependent methyl migration to produce 3-hydroxy-3-methyl-2-ketobutyrate (HMKB). In the reductase reaction, this 2-ketoacid undergoes a metal-dependent reduction by NADPH to yield (R)-2,3-dihydroxy-isovalerate. The sequence is that of Ketol-acid reductoisomerase (NADP(+)) from Staphylococcus saprophyticus subsp. saprophyticus (strain ATCC 15305 / DSM 20229 / NCIMB 8711 / NCTC 7292 / S-41).